The following is a 298-amino-acid chain: MTDATTISPLDQARILSEALPHMQEYDDETIVIKYGGHAMGDEDTAKAFARDIVLLEQTAINPVVVHGGGPQIATMLKRLGIVSEFAAGLRITDAATIEIVEMVLAGSINKQLVGYINEAGGKAVGLCGKDGNMVRAVKATRTMVDPDSHIEKVVDLGFVGEPDKVDLTLLNQLIGYELIPILAPLATSKEGQTFNVNADTFAGAVAGALKAKRLLLLTDVPGVLDKSKKLIPELSVKDARKLIADGTISGGMIPKVETCIYALEQGVQGVVILDGKVQHAVLLELFTNQGTGTLIHK.

Residues 69–70 (GG), arginine 91, and asparagine 196 contribute to the substrate site.

This sequence belongs to the acetylglutamate kinase family. ArgB subfamily.

It is found in the cytoplasm. It catalyses the reaction N-acetyl-L-glutamate + ATP = N-acetyl-L-glutamyl 5-phosphate + ADP. It participates in amino-acid biosynthesis; L-arginine biosynthesis; N(2)-acetyl-L-ornithine from L-glutamate: step 2/4. Functionally, catalyzes the ATP-dependent phosphorylation of N-acetyl-L-glutamate. This chain is Acetylglutamate kinase, found in Bradyrhizobium sp. (strain BTAi1 / ATCC BAA-1182).